Here is a 396-residue protein sequence, read N- to C-terminus: ATP-dependent RNA helicase eIF4A (396 aa).

The Q motif motif lies at 23–51; that stretch reads DSFDEMNLKSELLRGIYAYGFERPSAIQQ. In terms of domain architecture, Helicase ATP-binding spans 54–224; it reads IMPVIKGHDV…TKFMRDPVRI (171 aa). Residue 67 to 74 participates in ATP binding; sequence AQSGTGKT. The short motif at 172 to 175 is the DEAD box element; that stretch reads DEAD. Residues 235-396 form the Helicase C-terminal domain; the sequence is GIKQFYIAVE…EMPMNVADLI (162 aa).

This sequence belongs to the DEAD box helicase family. eIF4A subfamily. As to quaternary structure, component of the eIF4F complex, which composition varies with external and internal environmental conditions. It is composed of at least eIF4A, eIF4E and eIF4G.

Its subcellular location is the cytoplasm. The catalysed reaction is ATP + H2O = ADP + phosphate + H(+). Functionally, ATP-dependent RNA helicase which is a subunit of the eIF4F complex involved in cap recognition and is required for mRNA binding to ribosome. In the current model of translation initiation, eIF4A unwinds RNA secondary structures in the 5'-UTR of mRNAs which is necessary to allow efficient binding of the small ribosomal subunit, and subsequent scanning for the initiator codon. The protein is ATP-dependent RNA helicase eIF4A (TIF1) of Pyricularia oryzae (strain 70-15 / ATCC MYA-4617 / FGSC 8958) (Rice blast fungus).